The following is a 166-amino-acid chain: Protein phosphatase 1 regulatory subunit 1A (166 aa).

N-acetylmethionine is present on Met1. The tract at residues 1-166 (MEQDNSPRKI…SQDSQGASAV (166 aa)) is disordered. The segment at 9–12 (KIQF) is essential for activity. The span at 19–29 (PHLDPEAAEQI) shows a compositional bias: basic and acidic residues. Thr35 is subject to Phosphothreonine; by PKA. The segment at 42–54 (TSDQSSPEVDEDR) is essential for activity. 4 positions are modified to phosphoserine: Ser43, Ser46, Ser47, and Ser67. Low complexity predominate over residues 104-114 (AAEGTGAQESQ). Positions 143–152 (AQERRGEEPS) are enriched in basic and acidic residues. The tract at residues 143-166 (AQERRGEEPSTAKTSQDSQGASAV) is interaction with PPP1R15A. The segment covering 153–166 (TAKTSQDSQGASAV) has biased composition (polar residues).

The protein belongs to the protein phosphatase inhibitor 1 family. As to quaternary structure, interacts with PPP1R15A. Phosphorylation of Thr-35 is required for activity.

Its function is as follows. Inhibitor of protein-phosphatase 1. This protein may be important in hormonal control of glycogen metabolism. Hormones that elevate intracellular cAMP increase I-1 activity in many tissues. I-1 activation may impose cAMP control over proteins that are not directly phosphorylated by PKA. Following a rise in intracellular calcium, I-1 is inactivated by calcineurin (or PP2B). Does not inhibit type-2 phosphatases. This chain is Protein phosphatase 1 regulatory subunit 1A (PPP1R1A), found in Oryctolagus cuniculus (Rabbit).